The chain runs to 273 residues: Nitrogenase iron protein (273 aa).

8 to 15 (GKGGIGKS) lines the ATP pocket. Residue Cys95 coordinates [4Fe-4S] cluster. Arg98 carries the ADP-ribosylarginine; by dinitrogenase reductase ADP-ribosyltransferase modification. Position 130 (Cys130) interacts with [4Fe-4S] cluster.

It belongs to the NifH/BchL/ChlL family. Homodimer. Requires [4Fe-4S] cluster as cofactor. Post-translationally, the reversible ADP-ribosylation of Arg-98 inactivates the nitrogenase reductase and regulates nitrogenase activity.

The catalysed reaction is N2 + 8 reduced [2Fe-2S]-[ferredoxin] + 16 ATP + 16 H2O = H2 + 8 oxidized [2Fe-2S]-[ferredoxin] + 2 NH4(+) + 16 ADP + 16 phosphate + 6 H(+). In terms of biological role, the key enzymatic reactions in nitrogen fixation are catalyzed by the nitrogenase complex, which has 2 components: the iron protein and the molybdenum-iron protein. In Roseiflexus castenholzii (strain DSM 13941 / HLO8), this protein is Nitrogenase iron protein.